An 82-amino-acid chain; its full sequence is RNA-binding protein Hfq (82 aa).

The Sm domain maps to 11 to 71; it reads DTFLNHVRKT…ISTIMPGAPI (61 aa).

This sequence belongs to the Hfq family. As to quaternary structure, homohexamer.

In terms of biological role, RNA chaperone that binds small regulatory RNA (sRNAs) and mRNAs to facilitate mRNA translational regulation in response to envelope stress, environmental stress and changes in metabolite concentrations. Also binds with high specificity to tRNAs. In Rhodopseudomonas palustris (strain HaA2), this protein is RNA-binding protein Hfq.